The primary structure comprises 1433 residues: Bacillopeptidase F (1433 aa).

A signal peptide spans 1–30; that stretch reads MRKKTKNRLISSVLSTVVISSLLFPGAAGA. Positions 31-194 are excised as a propeptide; that stretch reads SSKVTSPSVK…NMKKAQKAIK (164 aa). The Inhibitor I9 domain occupies 68 to 177; sequence TFLIKFKDLA…KVLPNEKRQL (110 aa). A Peptidase S8 domain is found at 200–512; it reads EWNVDQIDAP…HGLVNAFDAV (313 aa). Active-site charge relay system residues include D227, H274, and S452. Positions 756–1433 are excised as a propeptide; the sequence is SAYKGQNIQV…NGKLNMNTEN (678 aa). Residues 800 to 830 are disordered; that stretch reads KLGVEKPSGKQKKKPVNPKKAKPSANTAVKH. A compositionally biased stretch (basic residues) spans 808–821; that stretch reads GKQKKKPVNPKKAK.

The protein belongs to the peptidase S8 family.

The protein resides in the secreted. In Bacillus subtilis (strain 168), this protein is Bacillopeptidase F (bpr).